Reading from the N-terminus, the 1595-residue chain is Collagen-like protein 2 (1595 aa).

N-linked (GlcNAc...) asparagine; by host glycosylation is found at N87 and N134. 4 Collagen-like domains span residues 97 to 155 (LRGE…NGDV), 175 to 233 (QVGL…KGEG), 236 to 295 (GSKG…KGDI), and 299 to 358 (GIKG…KGMK). The segment covering 181–190 (SQGDQGYKGD) has biased composition (low complexity). Disordered regions lie at residues 181 to 577 (SQGD…SPDL) and 604 to 1326 (TDIK…GIKG). 14 stretches are compositionally biased toward basic and acidic residues: residues 191–200 (QGSKGDKGQK), 209–448 (KGDK…KGTK), 456–466 (YKGDIGDKGIK), 474–501 (DKGD…DKGY), 510–561 (DNGE…DKGE), 606–615 (IKGEKGDKGE), 622–702 (KGDK…DKGD), 718–825 (KGDK…DKGI), 832–883 (KGDK…KGFK), 895–1041 (KGDK…DKGI), 1048–1098 (KGNK…DQGT), 1107–1151 (KGDK…KGIK), 1159–1250 (NKGD…KGDQ), and 1265–1300 (KGDK…DQGI). 3 N-linked (GlcNAc...) asparagine; by host glycosylation sites follow: N274, N280, and N286. N-linked (GlcNAc...) asparagine; by host glycans are attached at residues N373, N382, N400, and N409. 5 consecutive Collagen-like domains span residues 380–559 (GDNG…KGDK), 608–907 (GEKG…KGEN), 920–1039 (GDKG…KGDK), 1043–1102 (GTNG…KGET), and 1128–1307 (GDQG…SGAS). N1345, N1420, and N1545 each carry an N-linked (GlcNAc...) asparagine; by host glycan. A disordered region spans residues 1538-1585 (SAFDKGGNGSIRFNPPSSGTKGSGGGGSVQGGGGTIPNDGYPGGNGGP). The segment covering 1558–1585 (KGSGGGGSVQGGGGTIPNDGYPGGNGGP) has biased composition (gly residues).

Post-translationally, may be hydroxylated on lysine by the viral-encoded procollagen-lysine,2-oxoglutarate 5-dioxygenase.

The protein resides in the virion. In terms of biological role, may participate in the formation of a layer of cross-linked glycosylated fibrils at the viral surface thus giving it a hairy-like appearance. The chain is Collagen-like protein 2 from Acanthamoeba polyphaga (Amoeba).